The primary structure comprises 72 residues: Translation initiation factor IF-1 (72 aa).

In terms of domain architecture, S1-like spans 1-72 (MSKQSSIEQD…TKGRIVFRYK (72 aa)).

The protein belongs to the IF-1 family. As to quaternary structure, component of the 30S ribosomal translation pre-initiation complex which assembles on the 30S ribosome in the order IF-2 and IF-3, IF-1 and N-formylmethionyl-tRNA(fMet); mRNA recruitment can occur at any time during PIC assembly.

The protein localises to the cytoplasm. Functionally, one of the essential components for the initiation of protein synthesis. Stabilizes the binding of IF-2 and IF-3 on the 30S subunit to which N-formylmethionyl-tRNA(fMet) subsequently binds. Helps modulate mRNA selection, yielding the 30S pre-initiation complex (PIC). Upon addition of the 50S ribosomal subunit IF-1, IF-2 and IF-3 are released leaving the mature 70S translation initiation complex. The polypeptide is Translation initiation factor IF-1 (Cytophaga hutchinsonii (strain ATCC 33406 / DSM 1761 / CIP 103989 / NBRC 15051 / NCIMB 9469 / D465)).